The following is a 394-amino-acid chain: uncharacterized protein (394 aa).

Positions 7–51 (RKVIPNMPDLILRKIFDQYDYPVLCKMERVCRRWTNIINSKFRKE) constitute an F-box domain.

This is an uncharacterized protein from Caenorhabditis elegans.